The following is a 440-amino-acid chain: Stromal membrane-associated protein 1 (440 aa).

In terms of domain architecture, Arf-GAP spans 18-143 (QLILSKLLRE…IAITNKEKEK (126 aa)). A C4-type zinc finger spans residues 33–56 (CADCEAKGPRWASWNIGVFICIRC). Basic and acidic residues-rich tracts occupy residues 140-158 (EKEKKKDEKKREKEPEKPA) and 165-178 (KLPKKEEQQLEPKK). Disordered stretches follow at residues 140–211 (EKEK…PATA) and 410–440 (NASAGFGQPPSTTAGWSGSSSGQTLSTQLWK). The Interaction with clathrin heavy chains motif lies at 192–196 (LLGLD). A compositionally biased stretch (low complexity) spans 420–440 (STTAGWSGSSSGQTLSTQLWK).

Interacts with ARF6. Interacts with clathrin heavy chains via the clathrin box-like motif. Detected in adult brain, lung, heart, liver, ovary and bone marrow. Detected in stromal cells of the red pulp of adult spleen.

The protein resides in the cell membrane. Functionally, GTPase activating protein that acts on ARF6. Plays a role in clathrin-dependent endocytosis. May play a role in erythropoiesis. In Mus musculus (Mouse), this protein is Stromal membrane-associated protein 1 (Smap1).